Reading from the N-terminus, the 124-residue chain is Fluoride-specific ion channel FluC (124 aa).

4 consecutive transmembrane segments (helical) span residues 4 to 24 (VLYIAAGGAIGAVLRYSISIL), 35 to 55 (FGTLIVNVAGSFLMGCIYALA), 60 to 80 (IGPEWKALIGVGLLGALTTFS), and 100 to 120 (LNVLLNLILCLTVVYLGQQLI). Na(+) is bound by residues G74 and T77.

Belongs to the fluoride channel Fluc/FEX (TC 1.A.43) family.

Its subcellular location is the cell inner membrane. It carries out the reaction fluoride(in) = fluoride(out). With respect to regulation, na(+) is not transported, but it plays an essential structural role and its presence is essential for fluoride channel function. Its function is as follows. Fluoride-specific ion channel. Important for reducing fluoride concentration in the cell, thus reducing its toxicity. The polypeptide is Fluoride-specific ion channel FluC (Shewanella amazonensis (strain ATCC BAA-1098 / SB2B)).